The chain runs to 182 residues: Orotate phosphoribosyltransferase (182 aa).

5-phospho-alpha-D-ribose 1-diphosphate contacts are provided by residues arginine 93, lysine 94, lysine 97, and glutamate 119 to serine 127. Residues threonine 123 and arginine 151 each coordinate orotate.

The protein belongs to the purine/pyrimidine phosphoribosyltransferase family. PyrE subfamily. As to quaternary structure, homodimer. Mg(2+) serves as cofactor.

It carries out the reaction orotidine 5'-phosphate + diphosphate = orotate + 5-phospho-alpha-D-ribose 1-diphosphate. It participates in pyrimidine metabolism; UMP biosynthesis via de novo pathway; UMP from orotate: step 1/2. Catalyzes the transfer of a ribosyl phosphate group from 5-phosphoribose 1-diphosphate to orotate, leading to the formation of orotidine monophosphate (OMP). This is Orotate phosphoribosyltransferase from Haloquadratum walsbyi (strain DSM 16790 / HBSQ001).